The primary structure comprises 161 residues: Endoribonuclease YbeY (161 aa).

The Zn(2+) site is built by H121, H125, and H131.

This sequence belongs to the endoribonuclease YbeY family. The cofactor is Zn(2+).

It localises to the cytoplasm. In terms of biological role, single strand-specific metallo-endoribonuclease involved in late-stage 70S ribosome quality control and in maturation of the 3' terminus of the 16S rRNA. This chain is Endoribonuclease YbeY, found in Xanthomonas euvesicatoria pv. vesicatoria (strain 85-10) (Xanthomonas campestris pv. vesicatoria).